A 781-amino-acid polypeptide reads, in one-letter code: MTKAKKSRAYQEGDIRYKCDFQGCTKSFTRKEHARRHFRSHTNSKAFICPHCSSSFTRSDVLNRHVNQKHVKQNDAGSQTHPKHDKTLISSSDQELPFPSYVEADVQDAAYTDLKSHIDQPILPDQPIISDNFNEGLQSAIAQTGNNYMFTTSRRNNSISGSITIPESDQQINLQNKFLSTPSIKNNANKSLSPQDSISIFGTSPFNAYQQNTDNFVCWLFDNMEKDAPTESVSNFTDGINAKQLNLMPVLDSPTIDFLSSHFRVDDKLVAKDLLSLSAYSSLIQVMNNNYQLSEEALQYITRSRVNLWIAHYWKDFHPRWPFLHRGTLKVDEAPVELLLAMITMGMHFVGDAFAYSIAVSIHSTLRFSIYTHPDFKPPASLWVYQALLIAEIFEKMTSTVEQHNLSQIFHGVTIESMQNGLSSKDTVTEKIPKNMTGTNIAQHKWHQWVDREASKRIAFFSFVLDSQHVILFGYRPLIDITSVGLPLLCDEALWNADSYEAWTSLLNENDPPHFFPVLKMFLTNEHLPPKLSPWNMMIVLHGLTTIGWILSRENLGIVENIMQNNGTNLKNWRILLKASYKFWLRTYRVFFLNNGTLPLNHPYVRGCLATYELAHISLHTNIVALQTYAKSIVSTSRRLYASTSRYVSAWLASDDSEVSIKHAVDMVEAFLGGDMEYDVQNETGLHRPWCLYVSTLILWAYGYVSDGRCEMLEPGNNDCKSQLNAYLMQMRTGLSEKAKDHVYVRSKTLPLLKCVIDVLCPARWGLLVDGVRILSKLVQL.

2 C2H2-type zinc fingers span residues 17 to 41 (YKCD…FRSH) and 47 to 70 (FICP…NQKH).

The protein localises to the nucleus. The protein resides in the cytoplasm. It localises to the cytoskeleton. Its subcellular location is the spindle. Required for maintaining cell viability in nitrogen-deficient stationary phase (G0) cells. This chain is Zinc finger protein klf1 (klf1), found in Schizosaccharomyces pombe (strain 972 / ATCC 24843) (Fission yeast).